Here is a 191-residue protein sequence, read N- to C-terminus: MFTKTAIELIKELRGTDSIPHYNDTSIKATIDEMIALYEDLIKTITEHKEQKKEPFYLQHAITFHNSINRDKRCILAYLNERLNRIKEYRWSSGQSLLPDQLKERLSQNEIQFFSEYDKILTEYNSKVGLDLTIDPQPPKELYIEVRVIKELGEVVLNSGCTVNLNLNTTHFLKRSDITNLVKNGSLEHII.

Belongs to the GINS1/PSF1 family. In terms of assembly, component of the GINS complex which is a heterotetramer of gins1, gins2, gins3 and gins4.

The protein resides in the nucleus. In terms of biological role, the GINS complex plays an essential role in the initiation of DNA replication. In Dictyostelium discoideum (Social amoeba), this protein is Probable DNA replication complex GINS protein PSF1 (gins1).